Reading from the N-terminus, the 139-residue chain is NADPH-dependent 7-cyano-7-deazaguanine reductase (139 aa).

Catalysis depends on cysteine 34, which acts as the Thioimide intermediate. Aspartate 41 serves as the catalytic Proton donor. Residues 56-58 and 75-76 each bind substrate; these read VEL and HE.

Belongs to the GTP cyclohydrolase I family. QueF type 1 subfamily.

It is found in the cytoplasm. The catalysed reaction is 7-aminomethyl-7-carbaguanine + 2 NADP(+) = 7-cyano-7-deazaguanine + 2 NADPH + 3 H(+). It participates in tRNA modification; tRNA-queuosine biosynthesis. In terms of biological role, catalyzes the NADPH-dependent reduction of 7-cyano-7-deazaguanine (preQ0) to 7-aminomethyl-7-deazaguanine (preQ1). The polypeptide is NADPH-dependent 7-cyano-7-deazaguanine reductase (Nitrosospira multiformis (strain ATCC 25196 / NCIMB 11849 / C 71)).